The sequence spans 176 residues: dCTP deaminase (176 aa).

Residues 99 to 104 and Asp115 each bind dCTP; that span reads RSTLAR. The active-site Proton donor/acceptor is Glu125. DCTP is bound at residue Gln163.

The protein belongs to the dCTP deaminase family. In terms of assembly, homotrimer.

It catalyses the reaction dCTP + H2O + H(+) = dUTP + NH4(+). Its pathway is pyrimidine metabolism; dUMP biosynthesis; dUMP from dCTP (dUTP route): step 1/2. Catalyzes the deamination of dCTP to dUTP. The chain is dCTP deaminase from Pyrobaculum arsenaticum (strain DSM 13514 / JCM 11321 / PZ6).